The sequence spans 182 residues: Negative transcriptional regulator PadR (182 aa).

It belongs to the PadR family. As to quaternary structure, homodimer.

The protein resides in the cytoplasm. PadR repressor activity is inhibited in the presence of phenolic acids, which directly modulate PadR binding to the promoter of padC, leading to the dissociation of PadR from the operator DNA and expression of padC. In the presence of MgCl(2), binding is not altered by phenolic acids. Functionally, transcriptional regulator involved in the regulation of the metabolism of phenolic acids. In the absence of phenolic acids, represses the expression of padC, which encodes a phenolic acid decarboxylase (PAD) involved in the detoxification of harmful phenolic acids. Acts by binding to the padC promoter region, preventing the transcription of the gene. This Bacillus subtilis (strain 168) protein is Negative transcriptional regulator PadR.